A 142-amino-acid chain; its full sequence is ATP synthase epsilon chain (142 aa).

Belongs to the ATPase epsilon chain family. As to quaternary structure, F-type ATPases have 2 components, CF(1) - the catalytic core - and CF(0) - the membrane proton channel. CF(1) has five subunits: alpha(3), beta(3), gamma(1), delta(1), epsilon(1). CF(0) has three main subunits: a, b and c.

It localises to the cell inner membrane. Produces ATP from ADP in the presence of a proton gradient across the membrane. This chain is ATP synthase epsilon chain, found in Shewanella woodyi (strain ATCC 51908 / MS32).